Here is a 304-residue protein sequence, read N- to C-terminus: Putative ankyrin repeat protein R598 (304 aa).

7 ANK repeats span residues 7–36, 77–107, 122–151, 152–181, 183–209, 210–239, and 265–293; these read NIVTDIKNAICKDDLDSFIILMENNPSINL, YISTVLREEVIKNCSVKILKYLFDMGLPVDF, GSNHYIKENPGQDTLSLLRLLIEYGVDVNA, HNYLPLYSAVSSKNFDKVKLLVENGANVLR, ANGNENSFYFKIDSIKYLLDNGVEIDM, NLSRALFLSIKDNSIECIQFYLELGADINK, and FDFTSLNKLAGNNNERIIDVLINEANVDI.

In Acanthamoeba polyphaga (Amoeba), this protein is Putative ankyrin repeat protein R598.